The chain runs to 589 residues: Transcription factor atf-6 homolog (589 aa).

Residues 1–16 (MNFDNTVHESNFDDLL) are compositionally biased toward basic and acidic residues. Residues 1 to 82 (MNFDNTVHES…SSPPLSCANF (82 aa)) form a disordered region. Low complexity-rich tracts occupy residues 36–54 (GTDE…FSDQ) and 67–78 (GDSSSDSSPPLS). A bZIP domain is found at 250–299 (QNRKIRNRMYAQASRMRKKEADEHMKMNLQELLQENEILRTENAALKQRL). The basic motif stretch occupies residues 252 to 275 (RKIRNRMYAQASRMRKKEADEHMK). The stretch at 271-305 (DEHMKMNLQELLQENEILRTENAALKQRLAFFEHE) forms a coiled coil. The segment at 281–295 (LLQENEILRTENAAL) is leucine-zipper. The chain crosses the membrane as a helical span at residues 324 to 344 (IIAAGSVLMMFGLFAVISPFN).

This sequence belongs to the bZIP family. ATF subfamily.

The protein localises to the nucleus. It localises to the membrane. Its function is as follows. Transcription factor. Plays a role in the unfolded protein response (UPR), perhaps mainly during constitutive endoplasmic reticulum (ER) stress, by activating transcription of genes involved in the UPR. Plays a role in modulating lifespan, acting by positively regulating expression of calcium-binding chaperone crt-1, thereby influencing ER calcium homeostasis. By activating the UPR pathway, confers adaptive protection to subsequent exposure to hypoxia. Involved in protection against proteotoxicity, probably acting via the UPR. Probably acts in the UPR in parallel with the ire-1-xbp-1 and pek-1 pathways. May be regulated by endopeptidase S2P-mediated proteolytic cleavage. This is Transcription factor atf-6 homolog from Caenorhabditis elegans.